The following is a 548-amino-acid chain: Telomerase Cajal body protein 1 (548 aa).

The disordered stretch occupies residues 1-142 (MKTLETQPLA…SGEPAAEDEG (142 aa)). A compositionally biased stretch (low complexity) spans 15-31 (PSDQDPAPAHPSPHASP). Phosphoserine occurs at positions 26, 30, and 54. At serine 64 the chain carries Phosphoserine; by ATM. Residues serine 85, serine 90, serine 112, and serine 114 each carry the phosphoserine modification. 6 WD repeats span residues 167–206 (QPEN…YHEG), 222–267 (EGDT…LRAS), 272–313 (NHLD…RDCE), 323–364 (GQSG…ALLG), 365–405 (GHQG…YPLW), and 411–450 (VTTN…NDGK). Threonine 489 is modified (phosphothreonine). Serine 491 carries the post-translational modification Phosphoserine. Positions 526–548 (SIPDDHQGEKGQGGTEGGVGELI) are disordered. A compositionally biased stretch (gly residues) spans 535–548 (KGQGGTEGGVGELI).

It belongs to the TCAB1 family. In terms of assembly, component of the telomerase holoenzyme complex composed of one molecule of TERT, one molecule of WRAP53/TCAB1, two molecules of H/ACA ribonucleoprotein complex subunits DKC1, NOP10, NHP2 and GAR1, and a telomerase RNA template component (TERC). The telomerase holoenzyme complex is associated with TEP1, SMG6/EST1A and POT1. Interacts with the chaperonin-containing T-complex (TRiC) complex; which mediates the folding of WRAP53/TCAB1. Interacts with COIL. Interacts with SMN1. Interacts with RNF8. Interacts with histone H2AX. Phosphorylated at Ser-64 by ATM in response to DNA damage, promoting its interaction with histone H2AX and localization to sites of DNA double-strand breaks. As to expression, expressed in all tissues and cell lines examined.

It is found in the nucleus. The protein localises to the cajal body. The protein resides in the chromosome. Its subcellular location is the telomere. Functionally, RNA chaperone that plays a key role in telomere maintenance and RNA localization to Cajal bodies. Specifically recognizes and binds the Cajal body box (CAB box) present in both small Cajal body RNAs (scaRNAs) and telomerase RNA template component (TERC). Essential component of the telomerase holoenzyme complex, a ribonucleoprotein complex essential for the replication of chromosome termini that elongates telomeres in most eukaryotes. In the telomerase holoenzyme complex, required to stimulate the catalytic activity of the complex. Acts by specifically binding the CAB box of the TERC RNA and controlling the folding of the CR4/CR5 region of the TERC RNA, a critical step for telomerase activity. In addition, also controls telomerase holoenzyme complex localization to Cajal body. During S phase, required for delivery of TERC to telomeres during S phase and for telomerase activity. In addition to its role in telomere maintenance, also required for Cajal body formation, probably by mediating localization of scaRNAs to Cajal bodies. Also plays a role in DNA repair: phosphorylated by ATM in response to DNA damage and relocalizes to sites of DNA double-strand breaks to promote the repair of DNA double-strand breaks. Acts by recruiting the ubiquitin ligase RNF8 to DNA breaks and promote both homologous recombination (HR) and non-homologous end joining (NHEJ). This chain is Telomerase Cajal body protein 1, found in Homo sapiens (Human).